The following is a 327-amino-acid chain: Phenylalanine--tRNA ligase alpha subunit (327 aa).

Glu-252 lines the Mg(2+) pocket.

This sequence belongs to the class-II aminoacyl-tRNA synthetase family. Phe-tRNA synthetase alpha subunit type 1 subfamily. Tetramer of two alpha and two beta subunits. It depends on Mg(2+) as a cofactor.

The protein resides in the cytoplasm. It carries out the reaction tRNA(Phe) + L-phenylalanine + ATP = L-phenylalanyl-tRNA(Phe) + AMP + diphosphate + H(+). The chain is Phenylalanine--tRNA ligase alpha subunit from Aeromonas hydrophila subsp. hydrophila (strain ATCC 7966 / DSM 30187 / BCRC 13018 / CCUG 14551 / JCM 1027 / KCTC 2358 / NCIMB 9240 / NCTC 8049).